A 94-amino-acid polypeptide reads, in one-letter code: Integration host factor subunit beta (94 aa).

It belongs to the bacterial histone-like protein family. In terms of assembly, heterodimer of an alpha and a beta chain.

In terms of biological role, this protein is one of the two subunits of integration host factor, a specific DNA-binding protein that functions in genetic recombination as well as in transcriptional and translational control. The sequence is that of Integration host factor subunit beta from Yersinia pseudotuberculosis serotype O:1b (strain IP 31758).